Here is a 565-residue protein sequence, read N- to C-terminus: Oxygen-dependent choline dehydrogenase (565 aa).

Position 6-35 (6-35) interacts with FAD; the sequence is DYIIVGAGSAGNTLATRLTEDASVSVLLLE. Positions 182–203 are disordered; the sequence is QQEGFGPMDRSVTKKGRRSSTA. His475 acts as the Proton acceptor in catalysis.

It belongs to the GMC oxidoreductase family. The cofactor is FAD.

It catalyses the reaction choline + A = betaine aldehyde + AH2. The catalysed reaction is betaine aldehyde + NAD(+) + H2O = glycine betaine + NADH + 2 H(+). Its pathway is amine and polyamine biosynthesis; betaine biosynthesis via choline pathway; betaine aldehyde from choline (cytochrome c reductase route): step 1/1. In terms of biological role, involved in the biosynthesis of the osmoprotectant glycine betaine. Catalyzes the oxidation of choline to betaine aldehyde and betaine aldehyde to glycine betaine at the same rate. This Pseudomonas entomophila (strain L48) protein is Oxygen-dependent choline dehydrogenase.